Reading from the N-terminus, the 341-residue chain is Cyclic GMP-AMP synthase-like receptor (341 aa).

Residues S64 and 77 to 79 each bind ATP; that span reads EFD. Mg(2+) is bound by residues E77, D79, and D172. D172 lines the GTP pocket. ATP-binding positions include K230 and 246–250; that span reads SYHIK. Residue E258 participates in Mn(2+) binding.

Belongs to the mab-21 family. Mg(2+) is required as a cofactor. Mn(2+) serves as cofactor.

It catalyses the reaction GTP + ATP = 2',3'-cGAMP + 2 diphosphate. It carries out the reaction GTP + ATP = pppGp(2'-5')A + diphosphate. The catalysed reaction is pppGp(2'-5')A = 2',3'-cGAMP + diphosphate. In terms of biological role, nucleotidyltransferase that catalyzes the formation of cyclic GMP-AMP (2',3'-cGAMP) from ATP and GTP and plays a key role in innate immunity. Acts as a key sensor of double-stranded RNA (dsRNA), the presence of dsRNA in the cytoplasm being a danger signal that triggers the immune responses. Directly binds dsRNA, activating the nucleotidyltransferase activity, leading to synthesis of 2',3'-cGAMP, a second messenger that binds to and activates Sting, thereby triggering the immune response via activation of the NF-kappa-B transcription factor. The protein is Cyclic GMP-AMP synthase-like receptor of Hydra vulgaris (Hydra).